The primary structure comprises 263 residues: 3-methyl-2-oxobutanoate hydroxymethyltransferase (263 aa).

Mg(2+)-binding residues include Asp-45 and Asp-84. Residues 45–46 (DS), Asp-84, and Lys-112 contribute to the 3-methyl-2-oxobutanoate site. Mg(2+) is bound at residue Glu-114. The Proton acceptor role is filled by Glu-180.

It belongs to the PanB family. Homodecamer; pentamer of dimers. The cofactor is Mg(2+).

It localises to the cytoplasm. It carries out the reaction 3-methyl-2-oxobutanoate + (6R)-5,10-methylene-5,6,7,8-tetrahydrofolate + H2O = 2-dehydropantoate + (6S)-5,6,7,8-tetrahydrofolate. The protein operates within cofactor biosynthesis; (R)-pantothenate biosynthesis; (R)-pantoate from 3-methyl-2-oxobutanoate: step 1/2. Its function is as follows. Catalyzes the reversible reaction in which hydroxymethyl group from 5,10-methylenetetrahydrofolate is transferred onto alpha-ketoisovalerate to form ketopantoate. This is 3-methyl-2-oxobutanoate hydroxymethyltransferase from Klebsiella pneumoniae (strain 342).